Consider the following 1134-residue polypeptide: DNA polymerase II large subunit (1134 aa).

It belongs to the archaeal DNA polymerase II family. As to quaternary structure, heterodimer of a large subunit and a small subunit.

It carries out the reaction DNA(n) + a 2'-deoxyribonucleoside 5'-triphosphate = DNA(n+1) + diphosphate. The enzyme catalyses Exonucleolytic cleavage in the 3'- to 5'-direction to yield nucleoside 5'-phosphates.. Its function is as follows. Possesses two activities: a DNA synthesis (polymerase) and an exonucleolytic activity that degrades single-stranded DNA in the 3'- to 5'-direction. Has a template-primer preference which is characteristic of a replicative DNA polymerase. The sequence is that of DNA polymerase II large subunit from Methanocella arvoryzae (strain DSM 22066 / NBRC 105507 / MRE50).